Reading from the N-terminus, the 186-residue chain is Chromosomal replication initiator protein DnaA (186 aa).

A region of interest (domain I, interacts with DnaA modulators) is located at residue E1. Residue E1 is a region of interest, domain II. The interval 1–99 is domain III, AAA+ region; it reads EFFKTFNALI…GALNKVTHTS (99 aa). Residues 100–186 are domain IV, binds dsDNA; sequence LIGRSMTVES…GRNFGGRDHT (87 aa).

Belongs to the DnaA family. In terms of assembly, oligomerizes as a right-handed, spiral filament on DNA at oriC.

Its subcellular location is the cytoplasm. In terms of biological role, plays an essential role in the initiation and regulation of chromosomal replication. ATP-DnaA binds to the origin of replication (oriC) to initiate formation of the DNA replication initiation complex once per cell cycle. Binds the DnaA box (a 9 base pair repeat at the origin) and separates the double-stranded (ds)DNA. Forms a right-handed helical filament on oriC DNA; dsDNA binds to the exterior of the filament while single-stranded (ss)DNA is stabiized in the filament's interior. The ATP-DnaA-oriC complex binds and stabilizes one strand of the AT-rich DNA unwinding element (DUE), permitting loading of DNA polymerase. After initiation quickly degrades to an ADP-DnaA complex that is not apt for DNA replication. Binds acidic phospholipids. In Wolbachia sp, this protein is Chromosomal replication initiator protein DnaA.